Here is a 136-residue protein sequence, read N- to C-terminus: Protein PsiE (136 aa).

4 consecutive transmembrane segments (helical) span residues 15 to 35 (ILQN…VVFL), 55 to 75 (YELV…ALIV), 83 to 103 (HFPL…LIIV), and 108 to 128 (PMDV…LWLC).

It belongs to the PsiE family.

The protein resides in the cell inner membrane. The polypeptide is Protein PsiE (Salmonella gallinarum (strain 287/91 / NCTC 13346)).